Reading from the N-terminus, the 600-residue chain is Fructan 1-exohydrolase (600 aa).

The signal sequence occupies residues 1–27 (MAQAWAFLLPVLFFGSYVTNLFLPTYA). Residue D73 is part of the active site. N166, N234, and N246 each carry an N-linked (GlcNAc...) asparagine glycan. C444 and C490 are oxidised to a cystine. N-linked (GlcNAc...) asparagine glycosylation is present at N565.

This sequence belongs to the glycosyl hydrolase 32 family.

It catalyses the reaction Hydrolysis of terminal, non-reducing (2-&gt;1)-linked beta-D-fructofuranose residues in fructans.. With respect to regulation, inhibited by sucrose. Its function is as follows. Hydrolyzes inulin-type beta-(2,1)-fructans. May play a role as a beta-(2,1)-trimmer during graminan biosynthesis. The polypeptide is Fructan 1-exohydrolase (Leymus chinensis (Chinese lyme grass)).